Reading from the N-terminus, the 236-residue chain is Small ribosomal subunit protein uS3 (236 aa).

In terms of domain architecture, KH type-2 spans 39-107 (IRSYVMEELK…ETSLNIVEIR (69 aa)). The tract at residues 214 to 236 (ASEHRATRNDNSSSSLNRRRESV) is disordered.

The protein belongs to the universal ribosomal protein uS3 family. As to quaternary structure, part of the 30S ribosomal subunit. Forms a tight complex with proteins S10 and S14.

Functionally, binds the lower part of the 30S subunit head. Binds mRNA in the 70S ribosome, positioning it for translation. This is Small ribosomal subunit protein uS3 from Bartonella bacilliformis (strain ATCC 35685 / KC583 / Herrer 020/F12,63).